The following is a 271-amino-acid chain: Low choriolytic enzyme (271 aa).

Positions 1 to 20 (MDLLAKASVLLLLLLSLSNA) are cleaved as a signal peptide. Positions 21 to 71 (QTDNMEEAENGSSKEEIDESELEDVSSIIFRMNNNSMEELLEGDLVLPKTR) are cleaved as a propeptide — activation peptide. N-linked (GlcNAc...) asparagine glycans are attached at residues Asn-30 and Asn-54. Residues 72–271 (NAMKCFGAPD…ILRVNKLYKC (200 aa)) form the Peptidase M12A domain. 3 disulfide bridges follow: Cys-76–Cys-83, Cys-123–Cys-271, and Cys-144–Cys-164. His-172 provides a ligand contact to Zn(2+). The active site involves Glu-173. Zn(2+) contacts are provided by His-176 and His-182. An N-linked (GlcNAc...) asparagine glycan is attached at Asn-211.

The cofactor is Zn(2+).

It localises to the zymogen granule. The catalysed reaction is Hydrolysis of the inner layer of fish egg envelope. Also hydrolysis of casein and small molecule substrates such as succinyl-Leu-Leu-Val-Tyr-|-7-(4-methyl)coumarylamide.. In terms of biological role, participates in the breakdown of the egg envelope, which is derived from the egg extracellular matrix, at the time of hatching. Thus allowing the newly hatched fish to swim free. LCE solubilizes the egg envelope only after it has been swollen by the action of HCE. This chain is Low choriolytic enzyme (lce), found in Oryzias latipes (Japanese rice fish).